We begin with the raw amino-acid sequence, 341 residues long: Glyceraldehyde-3-phosphate dehydrogenase 3.1 (341 aa).

NAD(+) is bound by residues arginine 13–isoleucine 14, aspartate 35, and arginine 85. D-glyceraldehyde 3-phosphate contacts are provided by residues serine 157–threonine 159, threonine 188, threonine 217–glycine 218, and arginine 240. The active-site Nucleophile is the cysteine 158. An NAD(+)-binding site is contributed by asparagine 322.

Belongs to the glyceraldehyde-3-phosphate dehydrogenase family. Homotetramer.

The protein resides in the cytoplasm. It catalyses the reaction D-glyceraldehyde 3-phosphate + phosphate + NAD(+) = (2R)-3-phospho-glyceroyl phosphate + NADH + H(+). Its pathway is carbohydrate degradation; glycolysis; pyruvate from D-glyceraldehyde 3-phosphate: step 1/5. This Caenorhabditis briggsae protein is Glyceraldehyde-3-phosphate dehydrogenase 3.1.